We begin with the raw amino-acid sequence, 194 residues long: ATP-dependent Clp protease proteolytic subunit (194 aa).

Ser98 serves as the catalytic Nucleophile. His123 is an active-site residue.

It belongs to the peptidase S14 family. Fourteen ClpP subunits assemble into 2 heptameric rings which stack back to back to give a disk-like structure with a central cavity, resembling the structure of eukaryotic proteasomes.

It localises to the cytoplasm. The catalysed reaction is Hydrolysis of proteins to small peptides in the presence of ATP and magnesium. alpha-casein is the usual test substrate. In the absence of ATP, only oligopeptides shorter than five residues are hydrolyzed (such as succinyl-Leu-Tyr-|-NHMec, and Leu-Tyr-Leu-|-Tyr-Trp, in which cleavage of the -Tyr-|-Leu- and -Tyr-|-Trp bonds also occurs).. Cleaves peptides in various proteins in a process that requires ATP hydrolysis. Has a chymotrypsin-like activity. Plays a major role in the degradation of misfolded proteins. The sequence is that of ATP-dependent Clp protease proteolytic subunit from Clostridium botulinum (strain Hall / ATCC 3502 / NCTC 13319 / Type A).